Here is a 286-residue protein sequence, read N- to C-terminus: Acyl-CoA-binding domain-containing protein 6 (286 aa).

Residues 1–24 are disordered; that stretch reads MASPGVLEESSSGEACSGGCPEQW. A compositionally biased stretch (low complexity) spans 8–22; the sequence is EESSSGEACSGGCPE. The 86-residue stretch at 32–117 folds into the ACB domain; the sequence is LQGQFEQAAK…VKKLDPDWSP (86 aa). An acyl-CoA contacts are provided by residues 59–63, Lys-85, and Tyr-104; that span reads YARYK. ANK repeat units lie at residues 182 to 211 and 215 to 244; these read EGRC…HINM and EGQT…DPSL.

The protein resides in the cytoplasm. It localises to the nucleus. Its function is as follows. Binds long-chain acyl-coenzyme A molecules with a strong preference for unsaturated C18:1-CoA. Does not bind fatty acids. Plays a role in protein N-myristoylation. The protein is Acyl-CoA-binding domain-containing protein 6 (acbd6) of Xenopus tropicalis (Western clawed frog).